The chain runs to 525 residues: Polyamine aminopropyltransferase 1 (525 aa).

6 helical membrane passes run 21 to 41 (ALLVLAVFVVASCGLAYELIA), 53 to 73 (ILQFSSIIGAYLFAMGIGSWV), 89 to 109 (LELLVGLFGGVSAAALFLLFA), 117 to 137 (LVLYALVTVIGVLVGMEIPLV), 155 to 175 (VLTFDYLGALAVSLLFPLVLA), and 180 to 200 (LVRTGFLFGLCNTAIAVWTLW). Residues 220-464 (AGMVGAALLA…GEWGFILAAP (245 aa)) form the PABS domain. Residues 222-471 (MVGAALLAGF…AAPGRADFRP (250 aa)) are spermidine synthase. Glutamine 259 contacts S-methyl-5'-thioadenosine. Residues histidine 289 and aspartate 313 each coordinate spermidine. Residues aspartate 333 and 367 to 368 (DA) each bind S-methyl-5'-thioadenosine. Aspartate 385 acts as the Proton acceptor in catalysis.

The protein belongs to the spermidine/spermine synthase family. As to quaternary structure, homodimer or homotetramer.

The protein resides in the cell membrane. The enzyme catalyses S-adenosyl 3-(methylsulfanyl)propylamine + putrescine = S-methyl-5'-thioadenosine + spermidine + H(+). It participates in amine and polyamine biosynthesis; spermidine biosynthesis; spermidine from putrescine: step 1/1. Functionally, catalyzes the irreversible transfer of a propylamine group from the amino donor S-adenosylmethioninamine (decarboxy-AdoMet) to putrescine (1,4-diaminobutane) to yield spermidine. This Ralstonia nicotianae (strain ATCC BAA-1114 / GMI1000) (Ralstonia solanacearum) protein is Polyamine aminopropyltransferase 1.